The primary structure comprises 142 residues: Large ribosomal subunit protein uL11 (142 aa).

This sequence belongs to the universal ribosomal protein uL11 family. In terms of assembly, part of the ribosomal stalk of the 50S ribosomal subunit. Interacts with L10 and the large rRNA to form the base of the stalk. L10 forms an elongated spine to which L12 dimers bind in a sequential fashion forming a multimeric L10(L12)X complex. Post-translationally, one or more lysine residues are methylated.

Its function is as follows. Forms part of the ribosomal stalk which helps the ribosome interact with GTP-bound translation factors. The chain is Large ribosomal subunit protein uL11 from Alcanivorax borkumensis (strain ATCC 700651 / DSM 11573 / NCIMB 13689 / SK2).